We begin with the raw amino-acid sequence, 147 residues long: F420H(2)-dependent reductase Rv1155 (147 aa).

Coenzyme F420-(gamma-Glu)n contacts are provided by residues glutamine 32, glutamine 37, serine 50, 56–60, 77–79, and histidine 138; these read AKTRN and WSY.

Belongs to the F420H(2)-dependent biliverdin reductase family. Homodimer.

F420H(2)-dependent reductase able to catalyze the reduction of biliverdin-IXalpha to bilirubin-IXalpha in vitro. However, kinetic parameters show that it is less efficient than the biliverdin reductase Rv2074 and suggest biliverdin-IXalpha is unlikely to be the native substrate of Rv1155, which probably catalyzes the reduction of an alternative molecule in vivo. Binds coenzyme F420, but does not bind FMN or other flavins. Cannot use pyridoxine 5'-phosphate, pyridoxamine 5'-phosphate, pyridoxal 5'-phosphate (PLP), the anti-tuberculosis drug PA-824 or aflatoxin analogs as substrates. This is F420H(2)-dependent reductase Rv1155 from Mycobacterium tuberculosis (strain ATCC 25618 / H37Rv).